The sequence spans 113 residues: Large ribosomal subunit protein uL22 (113 aa).

It belongs to the universal ribosomal protein uL22 family. As to quaternary structure, part of the 50S ribosomal subunit.

In terms of biological role, this protein binds specifically to 23S rRNA; its binding is stimulated by other ribosomal proteins, e.g. L4, L17, and L20. It is important during the early stages of 50S assembly. It makes multiple contacts with different domains of the 23S rRNA in the assembled 50S subunit and ribosome. Functionally, the globular domain of the protein is located near the polypeptide exit tunnel on the outside of the subunit, while an extended beta-hairpin is found that lines the wall of the exit tunnel in the center of the 70S ribosome. This Geobacillus stearothermophilus (Bacillus stearothermophilus) protein is Large ribosomal subunit protein uL22.